A 271-amino-acid polypeptide reads, in one-letter code: Mannosyl-3-phosphoglycerate phosphatase (271 aa).

The active-site Nucleophile is aspartate 13. Residues aspartate 13, aspartate 15, and aspartate 214 each contribute to the Mg(2+) site.

This sequence belongs to the HAD-like hydrolase superfamily. MPGP family. It depends on Mg(2+) as a cofactor.

It localises to the cytoplasm. The catalysed reaction is 2-O-(alpha-D-mannosyl)-3-phosphoglycerate + H2O = (2R)-2-O-(alpha-D-mannosyl)-glycerate + phosphate. The polypeptide is Mannosyl-3-phosphoglycerate phosphatase (yedP) (Shigella boydii serotype 4 (strain Sb227)).